A 101-amino-acid chain; its full sequence is Small ribosomal subunit protein uS14 (101 aa).

It belongs to the universal ribosomal protein uS14 family. As to quaternary structure, part of the 30S ribosomal subunit. Contacts proteins S3 and S10.

Its function is as follows. Binds 16S rRNA, required for the assembly of 30S particles and may also be responsible for determining the conformation of the 16S rRNA at the A site. The protein is Small ribosomal subunit protein uS14 of Salmonella schwarzengrund (strain CVM19633).